Reading from the N-terminus, the 25-residue chain is uncharacterized protein (25 aa).

This is an uncharacterized protein from Ornithodoros (relapsing fever ticks).